We begin with the raw amino-acid sequence, 99 residues long: uncharacterized protein (99 aa).

The protein belongs to the ycf15 family.

Its subcellular location is the plastid. The protein localises to the chloroplast. This is an uncharacterized protein from Saccharum hybrid (Sugarcane).